Here is a 298-residue protein sequence, read N- to C-terminus: Probable endonuclease 4 (298 aa).

Zn(2+) contacts are provided by His70, His111, Glu146, Asp180, His183, His215, Asp228, His230, and Glu260.

This sequence belongs to the AP endonuclease 2 family. The cofactor is Zn(2+).

The catalysed reaction is Endonucleolytic cleavage to 5'-phosphooligonucleotide end-products.. In terms of biological role, endonuclease IV plays a role in DNA repair. It cleaves phosphodiester bonds at apurinic or apyrimidinic (AP) sites, generating a 3'-hydroxyl group and a 5'-terminal sugar phosphate. This Halalkalibacterium halodurans (strain ATCC BAA-125 / DSM 18197 / FERM 7344 / JCM 9153 / C-125) (Bacillus halodurans) protein is Probable endonuclease 4.